Reading from the N-terminus, the 429-residue chain is Ribosomal RNA small subunit methyltransferase B (429 aa).

S-adenosyl-L-methionine contacts are provided by residues 254–260 (CAAPGGK), Asp-277, Asp-303, and Asp-322. The active-site Nucleophile is Cys-375.

Belongs to the class I-like SAM-binding methyltransferase superfamily. RsmB/NOP family.

The protein resides in the cytoplasm. The catalysed reaction is cytidine(967) in 16S rRNA + S-adenosyl-L-methionine = 5-methylcytidine(967) in 16S rRNA + S-adenosyl-L-homocysteine + H(+). Its function is as follows. Specifically methylates the cytosine at position 967 (m5C967) of 16S rRNA. This Shigella flexneri protein is Ribosomal RNA small subunit methyltransferase B.